Reading from the N-terminus, the 313-residue chain is Acetaldehyde dehydrogenase 2 (313 aa).

Ser-12–Ile-15 is a binding site for NAD(+). Residue Cys-132 is the Acyl-thioester intermediate of the active site. NAD(+) contacts are provided by residues Ser-163–Asn-171 and Asn-287.

It belongs to the acetaldehyde dehydrogenase family.

It carries out the reaction acetaldehyde + NAD(+) + CoA = acetyl-CoA + NADH + H(+). This is Acetaldehyde dehydrogenase 2 (amnH) from Paraburkholderia xenovorans (strain LB400).